The primary structure comprises 279 residues: Dihydropteroate synthase type-1 (279 aa).

Residues 1–258 (MVTVFGILNL…APGDLRSAIT (258 aa)) enclose the Pterin-binding domain. Asn-9 serves as a coordination point for Mg(2+). (7,8-dihydropterin-6-yl)methyl diphosphate contacts are provided by residues Asp-82, Asn-101, Asp-173, Lys-212, and 246-248 (RTH).

It belongs to the DHPS family. Homodimer or homotrimer. Requires Mg(2+) as cofactor.

The enzyme catalyses (7,8-dihydropterin-6-yl)methyl diphosphate + 4-aminobenzoate = 7,8-dihydropteroate + diphosphate. The protein operates within cofactor biosynthesis; tetrahydrofolate biosynthesis; 7,8-dihydrofolate from 2-amino-4-hydroxy-6-hydroxymethyl-7,8-dihydropteridine diphosphate and 4-aminobenzoate: step 1/2. In terms of biological role, catalyzes the condensation of para-aminobenzoate (pABA) with 6-hydroxymethyl-7,8-dihydropterin diphosphate (DHPt-PP) to form 7,8-dihydropteroate (H2Pte), the immediate precursor of folate derivatives. In Corynebacterium glutamicum (Brevibacterium saccharolyticum), this protein is Dihydropteroate synthase type-1 (sulI).